A 302-amino-acid polypeptide reads, in one-letter code: 4-hydroxy-tetrahydrodipicolinate synthase (302 aa).

Thr46 is a binding site for pyruvate. The Proton donor/acceptor role is filled by Tyr134. Lys162 acts as the Schiff-base intermediate with substrate in catalysis. Val204 provides a ligand contact to pyruvate.

Belongs to the DapA family. As to quaternary structure, homotetramer; dimer of dimers.

It is found in the cytoplasm. The catalysed reaction is L-aspartate 4-semialdehyde + pyruvate = (2S,4S)-4-hydroxy-2,3,4,5-tetrahydrodipicolinate + H2O + H(+). Its pathway is amino-acid biosynthesis; L-lysine biosynthesis via DAP pathway; (S)-tetrahydrodipicolinate from L-aspartate: step 3/4. Functionally, catalyzes the condensation of (S)-aspartate-beta-semialdehyde [(S)-ASA] and pyruvate to 4-hydroxy-tetrahydrodipicolinate (HTPA). This is 4-hydroxy-tetrahydrodipicolinate synthase from Xylella fastidiosa (strain Temecula1 / ATCC 700964).